Consider the following 957-residue polypeptide: Glycine dehydrogenase (decarboxylating) (957 aa).

Lys-708 carries the N6-(pyridoxal phosphate)lysine modification.

It belongs to the GcvP family. As to quaternary structure, the glycine cleavage system is composed of four proteins: P, T, L and H. It depends on pyridoxal 5'-phosphate as a cofactor.

It carries out the reaction N(6)-[(R)-lipoyl]-L-lysyl-[glycine-cleavage complex H protein] + glycine + H(+) = N(6)-[(R)-S(8)-aminomethyldihydrolipoyl]-L-lysyl-[glycine-cleavage complex H protein] + CO2. In terms of biological role, the glycine cleavage system catalyzes the degradation of glycine. The P protein binds the alpha-amino group of glycine through its pyridoxal phosphate cofactor; CO(2) is released and the remaining methylamine moiety is then transferred to the lipoamide cofactor of the H protein. This Shigella boydii serotype 4 (strain Sb227) protein is Glycine dehydrogenase (decarboxylating).